Reading from the N-terminus, the 1084-residue chain is Probable sucrose-phosphate synthase 1 (1084 aa).

Gly residues predominate over residues 25–46 (GGGGGGGGGGGGGGGGGGGGGV). The interval 25 to 61 (GGGGGGGGGGGGGGGGGGGGGVDPRSPAAGAASPRGP) is disordered. The segment covering 48-61 (PRSPAAGAASPRGP) has biased composition (low complexity).

Belongs to the glycosyltransferase 1 family. Homodimer or homotetramer. As to expression, expressed in leaves mesophyll cells, scutellum of germinating seedlings and pollen of immature inflorescences.

The enzyme catalyses beta-D-fructose 6-phosphate + UDP-alpha-D-glucose = sucrose 6(F)-phosphate + UDP + H(+). It functions in the pathway glycan biosynthesis; sucrose biosynthesis; sucrose from D-fructose 6-phosphate and UDP-alpha-D-glucose: step 1/2. With respect to regulation, activity is regulated by phosphorylation and moderated by concentration of metabolites and light. Functionally, plays a role in photosynthetic sucrose synthesis by catalyzing the rate-limiting step of sucrose biosynthesis from UDP-glucose and fructose- 6-phosphate. Involved in the regulation of carbon partitioning in the leaves of plants. May regulate the synthesis of sucrose and therefore play a major role as a limiting factor in the export of photoassimilates out of the leaf. Plays a role for sucrose availability that is essential for plant growth and fiber elongation. This Oryza sativa subsp. indica (Rice) protein is Probable sucrose-phosphate synthase 1 (SPS1).